Reading from the N-terminus, the 123-residue chain is S-adenosylmethionine decarboxylase proenzyme 2 (123 aa).

Serine 65 functions as the Schiff-base intermediate with substrate; via pyruvic acid in the catalytic mechanism. Serine 65 carries the pyruvic acid (Ser); by autocatalysis modification. The active-site Proton acceptor; for processing activity is the histidine 70. The active-site Proton donor; for catalytic activity is cysteine 85.

The protein belongs to the prokaryotic AdoMetDC family. Type 1 subfamily. As to quaternary structure, heterotetramer of two alpha and two beta chains arranged as a dimer of alpha/beta heterodimers. Pyruvate serves as cofactor. In terms of processing, is synthesized initially as an inactive proenzyme. Formation of the active enzyme involves a self-maturation process in which the active site pyruvoyl group is generated from an internal serine residue via an autocatalytic post-translational modification. Two non-identical subunits are generated from the proenzyme in this reaction, and the pyruvate is formed at the N-terminus of the alpha chain, which is derived from the carboxyl end of the proenzyme. The post-translation cleavage follows an unusual pathway, termed non-hydrolytic serinolysis, in which the side chain hydroxyl group of the serine supplies its oxygen atom to form the C-terminus of the beta chain, while the remainder of the serine residue undergoes an oxidative deamination to produce ammonia and the pyruvoyl group blocking the N-terminus of the alpha chain.

It carries out the reaction S-adenosyl-L-methionine + H(+) = S-adenosyl 3-(methylsulfanyl)propylamine + CO2. The protein operates within amine and polyamine biosynthesis; S-adenosylmethioninamine biosynthesis; S-adenosylmethioninamine from S-adenosyl-L-methionine: step 1/1. In terms of biological role, catalyzes the decarboxylation of S-adenosylmethionine to S-adenosylmethioninamine (dcAdoMet), the propylamine donor required for the synthesis of the polyamines spermine and spermidine from the diamine putrescine. In Bacillus cereus (strain ATCC 14579 / DSM 31 / CCUG 7414 / JCM 2152 / NBRC 15305 / NCIMB 9373 / NCTC 2599 / NRRL B-3711), this protein is S-adenosylmethionine decarboxylase proenzyme 2.